The following is a 442-amino-acid chain: uncharacterized protein (442 aa).

This is an uncharacterized protein from Sputnik virophage.